The chain runs to 211 residues: Adenylate kinase (211 aa).

13 to 18 (GAGKGT) contributes to the ATP binding site. Positions 33-62 (STGDILRVAVANKTKLGLEAKKFMDAGQLV) are NMP. Residues T34, R39, 60–62 (QLV), 88–91 (GFPR), and Q95 contribute to the AMP site. Residues 129–161 (GRRTSKVTGKIYHIKFNPPVDEKPEDLVQRADD) are LID. ATP is bound by residues R130 and 139 to 140 (IY). Residues R158 and R169 each contribute to the AMP site. K197 provides a ligand contact to ATP.

The protein belongs to the adenylate kinase family. As to quaternary structure, monomer.

The protein localises to the cytoplasm. The enzyme catalyses AMP + ATP = 2 ADP. Its pathway is purine metabolism; AMP biosynthesis via salvage pathway; AMP from ADP: step 1/1. Catalyzes the reversible transfer of the terminal phosphate group between ATP and AMP. Plays an important role in cellular energy homeostasis and in adenine nucleotide metabolism. This is Adenylate kinase from Fusobacterium nucleatum subsp. nucleatum (strain ATCC 25586 / DSM 15643 / BCRC 10681 / CIP 101130 / JCM 8532 / KCTC 2640 / LMG 13131 / VPI 4355).